The primary structure comprises 107 residues: Nitrogenase-stabilizing/protective protein NifW (107 aa).

The protein belongs to the NifW family. As to quaternary structure, homotrimer; associates with NifD.

May protect the nitrogenase Fe-Mo protein from oxidative damage. The sequence is that of Nitrogenase-stabilizing/protective protein NifW from Gloeothece citriformis (strain PCC 7424) (Cyanothece sp. (strain PCC 7424)).